Consider the following 501-residue polypeptide: Beta-secretase 1 (501 aa).

The first 21 residues, 1 to 21, serve as a signal peptide directing secretion; it reads MAPALRWLLLWVGSGMLPAQG. The propeptide occupies 22–45; sequence THLGIRLPLRSGLAGPPLGLRLPR. Residues 22-457 are Extracellular-facing; that stretch reads THLGIRLPLR…PQTDESTLMT (436 aa). In terms of domain architecture, Peptidase A1 spans 75–416; sequence YYVEMTVGSP…DRARKRIGFA (342 aa). Asp-93 is an active-site residue. Lys-126 bears the N6-acetyllysine mark. Asn-153, Asn-172, and Asn-223 each carry an N-linked (GlcNAc...) asparagine glycan. 3 disulfides stabilise this stretch: Cys-216-Cys-420, Cys-278-Cys-443, and Cys-330-Cys-380. N6-acetyllysine is present on residues Lys-275, Lys-279, and Lys-285. Asp-289 is an active-site residue. Lys-299, Lys-300, and Lys-307 each carry N6-acetyllysine. A glycan (N-linked (GlcNAc...) asparagine) is linked at Asn-354. Residues 458-478 traverse the membrane as a helical segment; it reads IAYVMAAICALFMLPLCLMVC. Residues Cys-474, Cys-478, Cys-482, and Cys-485 are each lipidated (S-palmitoyl cysteine). Topologically, residues 479–501 are cytoplasmic; it reads QWRCLRCLRHQHDDFADDISLLK. Residues 479–501 form an interaction with RTN3 region; that stretch reads QWRCLRCLRHQHDDFADDISLLK. A DXXLL motif is present at residues 496–500; the sequence is DISLL. At Ser-498 the chain carries Phosphoserine. Lys-501 is covalently cross-linked (Glycyl lysine isopeptide (Lys-Gly) (interchain with G-Cter in ubiquitin)).

This sequence belongs to the peptidase A1 family. In terms of assembly, monomer. Interacts (via DXXLL motif) with GGA1, GGA2 and GGA3 (via their VHS domain); the interaction highly increases when BACE1 is phosphorylated at Ser-498. Interacts with RTN1; RTN2; RTN3 and RTN4; the interaction leads to inhibition of amyloid precursor protein processing. Interacts with SNX6. Interacts with PCSK9. Interacts with NAT8 and NAT8B. Interacts with BIN1. Interacts (via extracellular domain) with ADAM10 (via extracellular domain). Interacts with SORL1; this interaction may affect binding with APP and hence reduce APP cleavage. Interacts with NRDC AND NRG1. Palmitoylation mediates lipid raft localization. In terms of processing, acetylated in the endoplasmic reticulum at Lys-126, Lys-275, Lys-279, Lys-285, Lys-299, Lys-300 and Lys-307. Acetylation by NAT8 and NAT8B is transient and deacetylation probably occurs in the Golgi. Acetylation regulates the maturation, the transport to the plasma membrane, the stability and the expression of the protein. Post-translationally, ubiquitinated at Lys-501, ubiquitination leads to lysosomal degradation. Monoubiquitinated and 'Lys-63'-linked polyubitinated. Deubiquitnated by USP8; inhibits lysosomal degradation. Phosphorylation at Ser-498 is required for interaction with GGA1 and retrograded transport from endosomal compartments to the trans-Golgi network. Non-phosphorylated BACE1 enters a direct recycling route to the cell surface. In terms of processing, N-Glycosylated. Addition of a bisecting N-acetylglucosamine by MGAT3 blocks lysosomal targeting, further degradation and is required for maintaining stability under stress conditions.

Its subcellular location is the cell membrane. The protein resides in the golgi apparatus. It is found in the trans-Golgi network. It localises to the endoplasmic reticulum. The protein localises to the endosome. Its subcellular location is the cell surface. The protein resides in the cytoplasmic vesicle membrane. It is found in the membrane raft. It localises to the lysosome. The protein localises to the late endosome. Its subcellular location is the early endosome. The protein resides in the recycling endosome. It is found in the cell projection. It localises to the axon. The protein localises to the dendrite. The catalysed reaction is Broad endopeptidase specificity. Cleaves Glu-Val-Asn-Leu-|-Asp-Ala-Glu-Phe in the Swedish variant of Alzheimer's amyloid precursor protein.. With respect to regulation, inhibited by RTN3 and RTN4. Its function is as follows. Responsible for the proteolytic processing of the amyloid precursor protein (APP). Cleaves at the N-terminus of the A-beta peptide sequence, between residues 671 and 672 of APP, leads to the generation and extracellular release of beta-cleaved soluble APP, and a corresponding cell-associated C-terminal fragment which is later released by gamma-secretase. Cleaves CHL1. The polypeptide is Beta-secretase 1 (Bace1) (Rattus norvegicus (Rat)).